The chain runs to 442 residues: Ribulose bisphosphate carboxylase/oxygenase activase 1, chloroplastic (442 aa).

The N-terminal 58 residues, 1–58 (MATSVSTIGAVNKTPLSLNNSVAGTSVPSTAFFGKTLKKVYGKGVSSPKVTNKSLRIV), are a transit peptide targeting the chloroplast. Position 169 to 176 (169 to 176 (GGKGQGKS)) interacts with ATP.

This sequence belongs to the RuBisCO activase family.

Its subcellular location is the plastid. It is found in the chloroplast stroma. In terms of biological role, activation of RuBisCO (ribulose-1,5-bisphosphate carboxylase/oxygenase; EC 4.1.1.39) involves the ATP-dependent carboxylation of the epsilon-amino group of lysine leading to a carbamate structure. The sequence is that of Ribulose bisphosphate carboxylase/oxygenase activase 1, chloroplastic from Nicotiana tabacum (Common tobacco).